The chain runs to 384 residues: Protein V (384 aa).

2 disordered regions span residues 1–23 (MDQD…GGRE) and 38–317 (SEPT…TKKG). Over residues 7–20 (ILKEDSEVEREAPG) the composition is skewed to basic and acidic residues. The span at 50 to 59 (LHNTINTPQG) shows a compositional bias: polar residues. S68 carries the post-translational modification Phosphoserine; by host. Residues 83–101 (RSGEESRVSGRTSKPEAEA) show a composition bias toward basic and acidic residues. The residue at position 125 (S125) is a Phosphoserine; by host. The segment covering 150–168 (GIEDENREMAAHPDKRGED) has biased composition (basic and acidic residues). Over residues 191 to 206 (ASNNGRSMEPGSSHSA) the composition is skewed to polar residues. A phosphoserine; by host mark is found at S192, S249, S257, and S260. The Zn(2+) site is built by H318, C337, C341, C353, C355, C358, C362, and C365.

This sequence belongs to the paramyxoviruses V protein family. As to quaternary structure, interacts with host IFIH1/MDA5 and DHX58/LGP2. Interacts with host IRF3. Interacts with host RIGI regulatory protein (via CARDs domain) and host TRIM25 (via SPRY domain); these interactions prevent TRIM25-mediated ubiquitination of RIG-I and disrupts downstream RIG-I signaling.

It localises to the host cytoplasm. Plays an essential role in the inhibition of host immune response. Prevents the establishment of cellular antiviral state by blocking interferon-alpha/beta (IFN-alpha/beta) production and signaling pathway. Interacts with host IFIH1/MDA5 and DHX58/LGP2 to inhibit the transduction pathway involved in the activation of IFN-beta promoter, thus protecting the virus against cell antiviral state. Also interacts with and inhibits host IRF3. Blocks the type I interferon signaling pathway by disrupting the RIG-I signaling pathway. The chain is Protein V (P/V/C) from Sendai virus (strain Fushimi) (SeV).